The following is a 901-amino-acid chain: Flowering time control protein FPA (901 aa).

RRM domains lie at 18–90, 95–166, and 206–281; these read NNLW…YARP, KSLW…FLRS, and KVLW…YSND. The tract at residues 343–416 is disordered; sequence VGKEPNWRRP…SVDGFTPMGV (74 aa). The SPOC domain maps to 441–537; that stretch reads WRGMIAKGGT…DDGTTLFLVP (97 aa). Positions 655–736 are disordered; the sequence is SQPAAPESHQ…YPPASNNPNY (82 aa). 2 stretches are compositionally biased toward polar residues: residues 664–682 and 700–716; these read QPMS…SNGL and HDAS…QYTP.

The protein belongs to the RRM Spen family. Expressed in roots, leaves, stems and flowers. Highest expression in flower stems and meristematic regions.

It is found in the nucleus. Its function is as follows. Plays a role in the regulation of flowering time in the autonomous flowering pathway by decreasing FLOWERING LOCUS C mRNA levels. Required for RNA-mediated chromatin silencing of a range of loci in the genome. Cotranscriptionally recognizes aberrant RNA and marks it for silencing. Controls alternative cleavage and polyadenylation on pre-mRNAs and antisense RNAs. Acts redundantly with FCA to prevent the expression of distally polyadenylated antisense RNAs at the FLC locus. The sequence is that of Flowering time control protein FPA (FPA) from Arabidopsis thaliana (Mouse-ear cress).